A 290-amino-acid polypeptide reads, in one-letter code: NAD kinase (290 aa).

The active-site Proton acceptor is the aspartate 72. NAD(+) contacts are provided by residues 72 to 73 (DG), 146 to 147 (NE), arginine 174, aspartate 176, and 187 to 192 (TAYALS).

Belongs to the NAD kinase family. A divalent metal cation serves as cofactor.

It is found in the cytoplasm. The catalysed reaction is NAD(+) + ATP = ADP + NADP(+) + H(+). Its function is as follows. Involved in the regulation of the intracellular balance of NAD and NADP, and is a key enzyme in the biosynthesis of NADP. Catalyzes specifically the phosphorylation on 2'-hydroxyl of the adenosine moiety of NAD to yield NADP. The sequence is that of NAD kinase from Methylococcus capsulatus (strain ATCC 33009 / NCIMB 11132 / Bath).